Here is a 953-residue protein sequence, read N- to C-terminus: MTEVYSKAPATVGQVKLSNNGTSNKAYSVPKSPAPVRTDLFSKIPAGTKIQVGSHSVIIQRYLSEGGFSHVYLALLENEKPFVLKRIYVPDKTALQLVHGEIETMKRLKGHRHIVNYIDSSALYSKSENRYEVYLLMEFCAGGGLIDFMNTRLQHRLTEGEILKILADVCDAVAAMHYLDPPLIHRDLKIENVLLVAPNSYKLCDFGSACEPLAPATTPDTIMFLEQNIAAYTTPQYRAPEMIDINRRQGIDEKSDIWAIGVLAYKLCYYTTPFEQVGNSAILKASFSFPPFPRYSDRMKRFIATCLQEQPSHRPNIYQTLKEIMEMQGTPLKLPDVYGGVNASTYNPPRAPLQRTPSGSLTPLSSRPAHTSLPPIPTVQTTSSNVPPVNRPSLKSKSPSVSNILSNQLSPISSANNDVMARLQPKSPIPATKSYSATIQTPRSPSLRRADSTSHIIKVPHLPDTSVKTAKTGASEIDVLSRYPSVEEIDKITDKIEVSKPLRNSGPLAFKPFEKISANKQTDLLQNKPEALLDLENRFLPKPSPKPSEFSSSVGSKQNLSMDIPSVQNVSTKQKSTNDTDNSKLKINKPLTGGYAPLPSRPNRMNHSVLNEKSNKEFVRGPRVLPPIEVSSSKMAGLDIRKEPFTPAVPSAKSGLKKDQSSEVANKDVVSKNKDNIAILADREARPQLLLDDNNDSSSSSSEHLISFNNHTGNKILSRQTTSSSIDSNNVQSNIEFLKGLNATHARSTSQVSHTQRLQQSISTSLERVKSNTKKESNSPRQVSKLKRPIGASNKILSGKFGEAFKKFEFGGEKMSRRRKSETKKNLVSILPDTEVDEYPKASNEWIVESEELPQVHETINQYRKSCETQRSRKSHEGSNDLERQPSSPDTVHPGIKRSHFIRERVKQLLSDANKHHQSPSDSETDRTPDSSSIHLPHIERLNLFHTKSESLE.

A Protein kinase domain is found at V57 to E326. ATP is bound by residues L63 to V71 and K85. The Proton acceptor role is filled by D187. Disordered stretches follow at residues A343–S402, S427–D451, R538–N606, R641–V669, S748–G791, and R864–E953. Polar residues-rich tracts occupy residues R355 to A369, T378 to S402, and K433 to S444. Over residues P547 to K557 the composition is skewed to low complexity. A compositionally biased stretch (polar residues) spans Q558–K575. The segment covering L656–V669 has biased composition (basic and acidic residues). Positions S748–L766 are enriched in polar residues. 3 stretches are compositionally biased toward basic and acidic residues: residues E767–N778, K865–R884, and P937–E953. Phosphoserine occurs at positions 872 and 875.

Belongs to the protein kinase superfamily. Ser/Thr protein kinase family.

The protein localises to the cytoplasm. The catalysed reaction is L-seryl-[protein] + ATP = O-phospho-L-seryl-[protein] + ADP + H(+). It carries out the reaction L-threonyl-[protein] + ATP = O-phospho-L-threonyl-[protein] + ADP + H(+). In Schizosaccharomyces pombe (strain 972 / ATCC 24843) (Fission yeast), this protein is Serine/threonine-protein kinase ppk30 (ppk30).